The primary structure comprises 551 residues: Alkaline/neutral invertase CINV1 (551 aa).

Residue methionine 1 is modified to N-acetylmethionine. Serine 11, serine 14, serine 44, and serine 61 each carry phosphoserine. The interval 50–74 (TGYSRHDGIHDSPRGRSVLDTPLSS) is disordered. A compositionally biased stretch (basic and acidic residues) spans 53-63 (SRHDGIHDSPR). The residue at position 70 (threonine 70) is a Phosphothreonine. Serine 547 is modified (phosphoserine).

The protein belongs to the glycosyl hydrolase 100 family. In terms of assembly, forms homohexamers. Interacts with PIP5K9. Interaction with PIP5K9 represses CINV1 activity. Interacts with GRF1, GRF2, GRF3, GRF4, GRF5, GRF6, GRF7, GRF8 and GRF10; these interactions are dependent of the phosphorylation at Ser-547. Phosphorylated at Ser-547 by CPK3 and CPK21. In terms of tissue distribution, expressed in radicle, hypocotyls, root tips and vascular cylinder, leaf vasculature, shoot stipules, trichomes, stem, stigma apex and base of siliques.

The protein localises to the cytoplasm. It localises to the cytosol. The protein resides in the nucleus. It carries out the reaction Hydrolysis of terminal non-reducing beta-D-fructofuranoside residues in beta-D-fructofuranosides.. Functionally, cytosolic invertase that specifically cleaves sucrose into glucose and fructose and is involved in the regulation of multiple tissue development including primary root elongation, root hair growth, leaf and silique development, and floral transition. Is involved in osmotic stress-induced inhibition on lateral root growth by controlling the concentration of hexose in cells. May regulate sugar-mediated root development by controlling sucrose catabolism in root cells. Contributes to carbon partitioning and cellulose biosynthesis in seedlings. The polypeptide is Alkaline/neutral invertase CINV1 (Arabidopsis thaliana (Mouse-ear cress)).